The primary structure comprises 182 residues: MSRIGKMPIKVPLGIKVDINGNDVTVKGPKGTLSRSFRPEVTINREGDYLVVAPVGTDKATRAFFGLSRTLLDNMIVGVKDGFDKNLEIVGVGMRADKDGDKVVFKVGFSHSVTVAPPAGITLSVDGTTKVKVSGINKEDVGQMAAEIRSIRKPDHYMGKGIRYAGEYVRIKPGKAIGKGAK.

Belongs to the universal ribosomal protein uL6 family. In terms of assembly, part of the 50S ribosomal subunit.

Functionally, this protein binds to the 23S rRNA, and is important in its secondary structure. It is located near the subunit interface in the base of the L7/L12 stalk, and near the tRNA binding site of the peptidyltransferase center. In Dehalococcoides mccartyi (strain ATCC BAA-2100 / JCM 16839 / KCTC 5957 / BAV1), this protein is Large ribosomal subunit protein uL6.